A 134-amino-acid chain; its full sequence is Replication enhancer protein (134 aa).

The protein belongs to the geminiviridae replication enhancer protein family. As to quaternary structure, homooligomer. Interacts with the replication-associated protein (REP). Interacts with host proliferating cell nuclear antigen (PCNA). Interacts with host retinoblastoma-related protein 1 (RBR1), and may thereby deregulate the host cell cycle. Oligomerization and interaction with PCNA are necessary for optimal replication enhancement.

Its function is as follows. Increases viral DNA accumulation. Enhances infectivity and symptom expression. In Tomato leaf curl virus (strain Australia) (ToLCV), this protein is Replication enhancer protein.